A 188-amino-acid polypeptide reads, in one-letter code: ATP synthase subunit b 2 (188 aa).

Residues 41 to 61 (FFWLVISFGFFYFFIARVIVP) form a helical membrane-spanning segment.

Belongs to the ATPase B chain family. As to quaternary structure, F-type ATPases have 2 components, F(1) - the catalytic core - and F(0) - the membrane proton channel. F(1) has five subunits: alpha(3), beta(3), gamma(1), delta(1), epsilon(1). F(0) has three main subunits: a(1), b(2) and c(10-14). The alpha and beta chains form an alternating ring which encloses part of the gamma chain. F(1) is attached to F(0) by a central stalk formed by the gamma and epsilon chains, while a peripheral stalk is formed by the delta and b chains.

It is found in the cell inner membrane. Functionally, f(1)F(0) ATP synthase produces ATP from ADP in the presence of a proton or sodium gradient. F-type ATPases consist of two structural domains, F(1) containing the extramembraneous catalytic core and F(0) containing the membrane proton channel, linked together by a central stalk and a peripheral stalk. During catalysis, ATP synthesis in the catalytic domain of F(1) is coupled via a rotary mechanism of the central stalk subunits to proton translocation. In terms of biological role, component of the F(0) channel, it forms part of the peripheral stalk, linking F(1) to F(0). The b'-subunit is a diverged and duplicated form of b found in plants and photosynthetic bacteria. In Bartonella bacilliformis (strain ATCC 35685 / KC583 / Herrer 020/F12,63), this protein is ATP synthase subunit b 2 (atpF2).